The following is a 504-amino-acid chain: L-carnitine/gamma-butyrobetaine antiporter (504 aa).

12 helical membrane passes run 10–30 (IEPKVFFPPLIIVGILCWLTV), 51–71 (WGWAFEWYMVVMLFGWFWLVF), 92–112 (IFMMFASCTSAAVLFWGSIEI), 143–163 (GPLPWATYSFLSVAFAYFFFV), 195–215 (FYLVALIFAMGTSLGLATPLV), 231–251 (LDAIIITCWIILNAICVACGL), 263–283 (SYLSFLMLGWVFIVSGASFIM), 316–336 (WTVFYWAWWVIYAIQMSIFLA), 347–367 (LCFGMVLGLTASTWILWTVLG), 398–418 (WAALPLSTATIWGFFILCFIA), 446–466 (LLVRIGWSILVGIIGIVLLAL), and 475–495 (AIIAGGCPLFFVNIMVTLSFI).

The protein belongs to the BCCT transporter (TC 2.A.15) family. CaiT subfamily. As to quaternary structure, homotrimer.

The protein resides in the cell inner membrane. It catalyses the reaction 4-(trimethylamino)butanoate(in) + (R)-carnitine(out) = 4-(trimethylamino)butanoate(out) + (R)-carnitine(in). The protein operates within amine and polyamine metabolism; carnitine metabolism. Functionally, catalyzes the exchange of L-carnitine for gamma-butyrobetaine. The protein is L-carnitine/gamma-butyrobetaine antiporter of Escherichia coli O8 (strain IAI1).